The sequence spans 139 residues: Ribonuclease VapC36 (139 aa).

The PINc domain maps to 1–127 (MIVDTSAVVA…GNDFPQTDLE (127 aa)). Mg(2+)-binding residues include Asp-4 and Asp-100.

The protein belongs to the PINc/VapC protein family. Mg(2+) serves as cofactor.

Toxic component of a type II toxin-antitoxin (TA) system. An RNase. Its cognate antitoxin is VapB36. The chain is Ribonuclease VapC36 from Mycobacterium tuberculosis (strain ATCC 25618 / H37Rv).